A 508-amino-acid polypeptide reads, in one-letter code: Photosystem II CP47 reaction center protein (508 aa).

The next 6 membrane-spanning stretches (helical) occupy residues 21–36 (AVHIMHTALVAGWAGS), 101–115 (IVFSGLCFLSAIWHW), 140–156 (GIHLFLSGVACFGFGAF), 203–218 (IAAGLLGIIAGLFHLS), 237–252 (VLSSSIAAVFFAAFIV), and 457–472 (TFALLFFFGHIWHGAR).

Belongs to the PsbB/PsbC family. PsbB subfamily. As to quaternary structure, PSII is composed of 1 copy each of membrane proteins PsbA, PsbB, PsbC, PsbD, PsbE, PsbF, PsbH, PsbI, PsbJ, PsbK, PsbL, PsbM, PsbT, PsbX, PsbY, PsbZ, Psb30/Ycf12, at least 3 peripheral proteins of the oxygen-evolving complex and a large number of cofactors. It forms dimeric complexes. Binds multiple chlorophylls. PSII binds additional chlorophylls, carotenoids and specific lipids. is required as a cofactor.

The protein localises to the plastid. Its subcellular location is the chloroplast thylakoid membrane. Its function is as follows. One of the components of the core complex of photosystem II (PSII). It binds chlorophyll and helps catalyze the primary light-induced photochemical processes of PSII. PSII is a light-driven water:plastoquinone oxidoreductase, using light energy to abstract electrons from H(2)O, generating O(2) and a proton gradient subsequently used for ATP formation. The protein is Photosystem II CP47 reaction center protein of Gnetum parvifolium (Small-leaved jointfir).